Reading from the N-terminus, the 453-residue chain is Phosphoglucosamine mutase (453 aa).

The active-site Phosphoserine intermediate is the serine 105. Mg(2+) contacts are provided by serine 105, aspartate 244, aspartate 246, and aspartate 248. Residue serine 105 is modified to Phosphoserine.

Belongs to the phosphohexose mutase family. Requires Mg(2+) as cofactor. Activated by phosphorylation.

It catalyses the reaction alpha-D-glucosamine 1-phosphate = D-glucosamine 6-phosphate. In terms of biological role, catalyzes the conversion of glucosamine-6-phosphate to glucosamine-1-phosphate. The protein is Phosphoglucosamine mutase of Chromohalobacter salexigens (strain ATCC BAA-138 / DSM 3043 / CIP 106854 / NCIMB 13768 / 1H11).